The chain runs to 246 residues: ATP synthase subunit a (246 aa).

5 helical membrane-spanning segments follow: residues Gly-34 to Gly-54, Trp-92 to Leu-112, Asp-130 to Leu-150, Phe-155 to Phe-175, and Val-196 to Phe-216.

It belongs to the ATPase A chain family. As to quaternary structure, F-type ATPases have 2 components, CF(1) - the catalytic core - and CF(0) - the membrane proton channel. CF(1) has five subunits: alpha(3), beta(3), gamma(1), delta(1), epsilon(1). CF(0) has four main subunits: a, b, b' and c.

It localises to the cell inner membrane. Key component of the proton channel; it plays a direct role in the translocation of protons across the membrane. In Gloeobacter violaceus (strain ATCC 29082 / PCC 7421), this protein is ATP synthase subunit a.